Reading from the N-terminus, the 235-residue chain is Ribitol-5-phosphate cytidylyltransferase (235 aa).

CTP contacts are provided by residues 7–10, 82–88, and serine 113; these read LAGG and GADRNTS.

The protein belongs to the IspD/TarI cytidylyltransferase family. TarI subfamily.

The catalysed reaction is D-ribitol 5-phosphate + CTP + H(+) = CDP-L-ribitol + diphosphate. It participates in cell wall biogenesis; poly(ribitol phosphate) teichoic acid biosynthesis. Catalyzes the transfer of the cytidylyl group of CTP to D-ribitol 5-phosphate. This is Ribitol-5-phosphate cytidylyltransferase from Streptococcus pneumoniae (strain CGSP14).